A 63-amino-acid chain; its full sequence is MSEKNMEKAGVVKADELDEMIDETTGGASTVNTVGIHTTYLISKGLQNCPLKPTTILPILPRK.

Positions 1 to 28 (MSEKNMEKAGVVKADELDEMIDETTGGA) are cleaved as a propeptide — cleaved by FlvT. 2,3-didehydrobutyrine; by FlvM2 is present on residues Thr-30, Thr-33, Thr-38, and Thr-39. The segment at residues 43 to 49 (SKGLQNC) is a cross-link (lanthionine (Ser-Cys); by FlvM2). Thr-54 and Thr-55 each carry 2,3-didehydrobutyrine; by FlvM2.

Post-translationally, maturation of FlvA2 peptides involves the enzymatic conversion of Thr, and Ser into dehydrated AA and the formation of thioether bonds with cysteines. Modifications are processed by the flavecin synthetase FlvM2. This is followed by membrane translocation and cleavage of the modified precursor. In terms of processing, contains DL-lanthionine, when coepressed in E.coli with the flavecin synthetase FlvM2.

The protein resides in the secreted. Its function is as follows. Lanthionine-containing peptide that does probably not show antibacterial activity, since its analog [+3]Flvbeta.a does not show antibacterial activity against M.luteus. Also does not show antibiotic activity when tested with [Del2]Flvalpha.a, an analog of Flvalpha.a, which is encoded by the same operon than Flvbeta.a. The bactericidal activity of lantibiotics is based on depolarization of energized bacterial cytoplasmic membranes, initiated by the formation of aqueous transmembrane pores. This Ruminococcus flavefaciens protein is Lantipeptide Flvbeta.a.